The following is a 328-amino-acid chain: Acetaldehyde dehydrogenase 3 (328 aa).

17–20 (SGNI) serves as a coordination point for NAD(+). Cys135 serves as the catalytic Acyl-thioester intermediate. NAD(+) contacts are provided by residues 166–174 (SAGPGTRAN) and Asn298.

Belongs to the acetaldehyde dehydrogenase family.

It catalyses the reaction acetaldehyde + NAD(+) + CoA = acetyl-CoA + NADH + H(+). This is Acetaldehyde dehydrogenase 3 from Nocardia farcinica (strain IFM 10152).